A 210-amino-acid chain; its full sequence is Large ribosomal subunit protein uL3 (210 aa).

Positions 132–144 are enriched in basic residues; it reads GPMKHGSKYHRRP. A disordered region spans residues 132-152; sequence GPMKHGSKYHRRPGSAGAKGP.

The protein belongs to the universal ribosomal protein uL3 family. Part of the 50S ribosomal subunit. Forms a cluster with proteins L14 and L19.

Its function is as follows. One of the primary rRNA binding proteins, it binds directly near the 3'-end of the 23S rRNA, where it nucleates assembly of the 50S subunit. This is Large ribosomal subunit protein uL3 from Heliobacterium modesticaldum (strain ATCC 51547 / Ice1).